We begin with the raw amino-acid sequence, 270 residues long: MAIKLIAIDMDGTLLLPDHTISPAVKNAIAAARARGVNVVLTTGRPYAGVHNYLKELHMEQPGDYCITYNGALVQKAADGSTVAQTALSYDDYRFLEKLSREVGSHFHALDRTTLYTANRDISYYTVHESFVATIPLVFCEAEKMDPNTQFLKVMMIDEPAILDQAIARIPQEVKEKYTVLKSAPYFLEILDKRVNKGTGVKSLADVLGIKPEEIMAIGDQENDIAMIEYAGVGVAMDNAIPSVKEVANFVTKSNLEDGVAFAIEKYVLN.

Asp-9 (nucleophile) is an active-site residue. Asp-9 is a Mg(2+) binding site. Position 10 (Met-10) interacts with phosphate. Asp-11 is a Mg(2+) binding site. Phosphate-binding positions include 43–44 (TG) and Lys-197. A Mg(2+)-binding site is contributed by Asp-220. Asn-223 contributes to the phosphate binding site.

It belongs to the HAD-like hydrolase superfamily. Cof family. In terms of assembly, homodimer. It depends on Mg(2+) as a cofactor.

The catalysed reaction is sugar phosphate + H2O = sugar + phosphate.. Catalyzes the dephosphorylation of different sugar phosphates. The protein is Sugar phosphatase YidA (yidA) of Escherichia coli O6:H1 (strain CFT073 / ATCC 700928 / UPEC).